Here is a 318-residue protein sequence, read N- to C-terminus: Magnetosome protein MamM (318 aa).

Residues 1–210 are transmembrane domain (TMD); that stretch reads MRKSGCAVCS…FMDAYRGLMD (210 aa). 4 helical membrane-spanning segments follow: residues 13–33, 39–59, 81–101, and 117–137; these read IGWVGLAVSTVLMVMKAFVGL, AMLADAMYSLKDMLNALMVII, FILSMVVSVVFIVLTGYLLVH, and LIVLWAALVSIGVNVGMYFYS. The interval 211–318 is C-terminal domain (CTD); sequence HTAGEAVQNR…DEVMLSKVDN (108 aa). Fe cation is bound by residues Asp-249, His-264, His-285, and Glu-289.

The protein belongs to the cation diffusion facilitator (CDF) transporter (TC 2.A.4) family. As to quaternary structure, forms homodimers via its C-terminal domain (CTD) in the presence of metal cations. Interacts with MamB via their CTD. Isolated CTD forms homodimers.

The protein resides in the magnetosome membrane. It localises to the cell inner membrane. Functionally, essential for magnetosome formation; required for stable accumulation of MamB. May nucleate iron crystal formation. Probably binds and transports iron. Binds divalent cations, possibly up to 3 Zn(2+) per dimer in vitro, probably iron in vivo. One of 7 genes (mamLQBIEMO) able to induce magnetosome membrane biogenesis; coexpression of mamLQRBIEMO in a deletion of the 17 gene mamAB operon restores magnetosome vesicle formation but not magnetite biosynthesis. The protein is Magnetosome protein MamM of Magnetospirillum gryphiswaldense (strain DSM 6361 / JCM 21280 / NBRC 15271 / MSR-1).